The following is a 483-amino-acid chain: Succinate semialdehyde dehydrogenase (483 aa).

NAD(+)-binding positions include 156–157 (WN), 180–183 (KPAP), and 233–234 (GS). Glu255 serves as the catalytic Proton acceptor. Leu256 is a binding site for NAD(+). The Nucleophile role is filled by Cys289. Glu386 lines the NAD(+) pocket.

This sequence belongs to the aldehyde dehydrogenase family. In terms of assembly, homotetramer.

It catalyses the reaction succinate semialdehyde + NAD(+) + H2O = succinate + NADH + 2 H(+). In terms of biological role, involved in the degradation of the pyridine ring of trigonelline (TG; N-methylnicotinate) into succinate and methylamine as carbon and nitrogen sources, respectively. Catalyzes the NAD(+)-dependent oxidation of succinate semialdehyde to succinate. This Acinetobacter baylyi (strain ATCC 33305 / BD413 / ADP1) protein is Succinate semialdehyde dehydrogenase.